Reading from the N-terminus, the 629-residue chain is Phosphomethylpyrimidine synthase (629 aa).

The tract at residues Met1 to Ser21 is disordered. Residues Asn233, Met262, Tyr291, His327, Ser347–Gly349, Asp388–Arg391, and Glu427 each bind substrate. His431 is a binding site for Zn(2+). Residue Tyr454 participates in substrate binding. His495 is a Zn(2+) binding site. [4Fe-4S] cluster contacts are provided by Cys575, Cys578, and Cys583.

Belongs to the ThiC family. As to quaternary structure, homodimer. The cofactor is [4Fe-4S] cluster.

It carries out the reaction 5-amino-1-(5-phospho-beta-D-ribosyl)imidazole + S-adenosyl-L-methionine = 4-amino-2-methyl-5-(phosphooxymethyl)pyrimidine + CO + 5'-deoxyadenosine + formate + L-methionine + 3 H(+). It functions in the pathway cofactor biosynthesis; thiamine diphosphate biosynthesis. Functionally, catalyzes the synthesis of the hydroxymethylpyrimidine phosphate (HMP-P) moiety of thiamine from aminoimidazole ribotide (AIR) in a radical S-adenosyl-L-methionine (SAM)-dependent reaction. The sequence is that of Phosphomethylpyrimidine synthase from Pseudomonas syringae pv. syringae (strain B728a).